We begin with the raw amino-acid sequence, 363 residues long: 3-isopropylmalate dehydrogenase (363 aa).

78–91 (GPKWEHLPPDQQPE) is an NAD(+) binding site. Positions 99, 109, 138, and 227 each coordinate substrate. Residues D227, D251, and D255 each contribute to the Mg(2+) site. NAD(+) is bound at residue 285–297 (GSAPDIAGKNIAN).

Belongs to the isocitrate and isopropylmalate dehydrogenases family. LeuB type 1 subfamily. In terms of assembly, homodimer. It depends on Mg(2+) as a cofactor. Mn(2+) serves as cofactor.

The protein localises to the cytoplasm. It carries out the reaction (2R,3S)-3-isopropylmalate + NAD(+) = 4-methyl-2-oxopentanoate + CO2 + NADH. Its pathway is amino-acid biosynthesis; L-leucine biosynthesis; L-leucine from 3-methyl-2-oxobutanoate: step 3/4. Its function is as follows. Catalyzes the oxidation of 3-carboxy-2-hydroxy-4-methylpentanoate (3-isopropylmalate) to 3-carboxy-4-methyl-2-oxopentanoate. The product decarboxylates to 4-methyl-2 oxopentanoate. In Escherichia coli O157:H7, this protein is 3-isopropylmalate dehydrogenase.